The chain runs to 297 residues: 4-hydroxy-tetrahydrodipicolinate synthase (297 aa).

A pyruvate-binding site is contributed by Thr-50. The Proton donor/acceptor role is filled by Tyr-138. Residue Lys-166 is the Schiff-base intermediate with substrate of the active site. Ile-208 contacts pyruvate.

It belongs to the DapA family. In terms of assembly, homotetramer; dimer of dimers.

It localises to the cytoplasm. It catalyses the reaction L-aspartate 4-semialdehyde + pyruvate = (2S,4S)-4-hydroxy-2,3,4,5-tetrahydrodipicolinate + H2O + H(+). It functions in the pathway amino-acid biosynthesis; L-lysine biosynthesis via DAP pathway; (S)-tetrahydrodipicolinate from L-aspartate: step 3/4. In terms of biological role, catalyzes the condensation of (S)-aspartate-beta-semialdehyde [(S)-ASA] and pyruvate to 4-hydroxy-tetrahydrodipicolinate (HTPA). The protein is 4-hydroxy-tetrahydrodipicolinate synthase of Desulfotalea psychrophila (strain LSv54 / DSM 12343).